The chain runs to 169 residues: Queuosine precursor transporter QueT (169 aa).

5 helical membrane-spanning segments follow: residues 9 to 29 (IVTI…PGLS), 44 to 64 (LNFT…GCMI), 73 to 93 (VDVI…VLLF), 110 to 130 (FFFF…ELKF), and 137 to 157 (LLTW…GAFI).

It belongs to the vitamin uptake transporter (VUT/ECF) (TC 2.A.88) family. As to quaternary structure, in E.coli forms a stable energy-coupling factor (ECF) transporter complex composed of 2 membrane-embedded substrate-binding protein (S component), 2 ATP-binding proteins (A and A' components) and 2 transmembrane proteins (T component), probably with a stoichiometry of 2:1:1:2. May be able to interact with more than 1 S component at a time.

The protein resides in the cell membrane. Functionally, probably a queuosine precursor-binding protein that interacts with the energy-coupling factor (ECF) ABC-transporter complex. Unlike classic ABC transporters this ECF transporter provides the energy necessary to transport a number of different substrates. The substrates themselves are bound by transmembrane, not extracytoplasmic soluble proteins. This chain is Queuosine precursor transporter QueT (queT), found in Lactococcus lactis subsp. cremoris (strain MG1363).